The primary structure comprises 94 residues: MKIRPLADRVVIKKVEAEEKTASGIVLPGAAKEQPQIAEVVEVGPGGIVEGKEIKMELTVGDKVIFQKYSGTEVKIEGQEYTILRQSDVLAVIE.

This sequence belongs to the GroES chaperonin family. In terms of assembly, heptamer of 7 subunits arranged in a ring. Interacts with the chaperonin GroEL.

The protein resides in the cytoplasm. Its function is as follows. Together with the chaperonin GroEL, plays an essential role in assisting protein folding. The GroEL-GroES system forms a nano-cage that allows encapsulation of the non-native substrate proteins and provides a physical environment optimized to promote and accelerate protein folding. GroES binds to the apical surface of the GroEL ring, thereby capping the opening of the GroEL channel. In Clostridioides difficile (strain 630) (Peptoclostridium difficile), this protein is Co-chaperonin GroES.